The primary structure comprises 349 residues: Isopentenyl-diphosphate delta-isomerase (349 aa).

Position 6 to 7 (6 to 7 (RK)) interacts with substrate. Residues 62-64 (AMT), serine 93, and asparagine 122 contribute to the FMN site. A substrate-binding site is contributed by glutamine 152. Residue glutamate 153 coordinates Mg(2+). FMN is bound by residues lysine 184, threonine 214, 258–259 (GG), and 280–281 (AG).

It belongs to the IPP isomerase type 2 family. In terms of assembly, homooctamer. Dimer of tetramers. It depends on FMN as a cofactor. Requires NADPH as cofactor. Mg(2+) is required as a cofactor.

Its subcellular location is the cytoplasm. It carries out the reaction isopentenyl diphosphate = dimethylallyl diphosphate. Involved in the biosynthesis of isoprenoids. Catalyzes the 1,3-allylic rearrangement of the homoallylic substrate isopentenyl (IPP) to its allylic isomer, dimethylallyl diphosphate (DMAPP). The sequence is that of Isopentenyl-diphosphate delta-isomerase from Bacillus cytotoxicus (strain DSM 22905 / CIP 110041 / 391-98 / NVH 391-98).